The primary structure comprises 63 residues: Small ribosomal subunit protein bS21 (63 aa).

Belongs to the bacterial ribosomal protein bS21 family.

This is Small ribosomal subunit protein bS21 from Azobacteroides pseudotrichonymphae genomovar. CFP2.